The following is an 89-amino-acid chain: Small ribosomal subunit protein uS15 (89 aa).

It belongs to the universal ribosomal protein uS15 family. In terms of assembly, part of the 30S ribosomal subunit. Forms a bridge to the 50S subunit in the 70S ribosome, contacting the 23S rRNA.

One of the primary rRNA binding proteins, it binds directly to 16S rRNA where it helps nucleate assembly of the platform of the 30S subunit by binding and bridging several RNA helices of the 16S rRNA. In terms of biological role, forms an intersubunit bridge (bridge B4) with the 23S rRNA of the 50S subunit in the ribosome. In Photorhabdus luminescens (Xenorhabdus luminescens), this protein is Small ribosomal subunit protein uS15.